Reading from the N-terminus, the 149-residue chain is Large ribosomal subunit protein uL15 (149 aa).

2 stretches are compositionally biased toward basic residues: residues 1–14 (MPTR…HRGH) and 21–30 (RVGKHRKHPG). Residues 1 to 43 (MPTRFSKTRKHRGHVSAGKGRVGKHRKHPGGRGMAGGQHHHRT) form a disordered region.

This sequence belongs to the universal ribosomal protein uL15 family. In terms of assembly, component of the large ribosomal subunit (LSU). Mature N.crassa ribosomes consist of a small (40S) and a large (60S) subunit. The 40S small subunit contains 1 molecule of ribosomal RNA (18S rRNA) and at least 32 different proteins. The large 60S subunit contains 3 rRNA molecules (26S, 5.8S and 5S rRNA) and at least 42 different proteins.

It localises to the cytoplasm. Functionally, component of the ribosome, a large ribonucleoprotein complex responsible for the synthesis of proteins in the cell. The small ribosomal subunit (SSU) binds messenger RNAs (mRNAs) and translates the encoded message by selecting cognate aminoacyl-transfer RNA (tRNA) molecules. The large subunit (LSU) contains the ribosomal catalytic site termed the peptidyl transferase center (PTC), which catalyzes the formation of peptide bonds, thereby polymerizing the amino acids delivered by tRNAs into a polypeptide chain. The nascent polypeptides leave the ribosome through a tunnel in the LSU and interact with protein factors that function in enzymatic processing, targeting, and the membrane insertion of nascent chains at the exit of the ribosomal tunnel. The sequence is that of Large ribosomal subunit protein uL15 (rpl-28) from Neurospora crassa (strain ATCC 24698 / 74-OR23-1A / CBS 708.71 / DSM 1257 / FGSC 987).